Reading from the N-terminus, the 183-residue chain is Large ribosomal subunit protein uL6 (183 aa).

The protein belongs to the universal ribosomal protein uL6 family. Part of the 50S ribosomal subunit.

Its function is as follows. This protein binds to the 23S rRNA, and is important in its secondary structure. It is located near the subunit interface in the base of the L7/L12 stalk, and near the tRNA binding site of the peptidyltransferase center. The protein is Large ribosomal subunit protein uL6 of Porphyromonas gingivalis (strain ATCC 33277 / DSM 20709 / CIP 103683 / JCM 12257 / NCTC 11834 / 2561).